The sequence spans 227 residues: 2-phospho-L-lactate guanylyltransferase (227 aa).

The protein belongs to the CofC family. Homodimer.

It carries out the reaction (2S)-2-phospholactate + GTP + H(+) = (2S)-lactyl-2-diphospho-5'-guanosine + diphosphate. The protein operates within cofactor biosynthesis; coenzyme F420 biosynthesis. Guanylyltransferase that catalyzes the activation of (2S)-2-phospholactate (2-PL) as (2S)-lactyl-2-diphospho-5'-guanosine, via the condensation of 2-PL with GTP. It is involved in the biosynthesis of coenzyme F420, a hydride carrier cofactor. In Methanocaldococcus sp. (strain FS406-22), this protein is 2-phospho-L-lactate guanylyltransferase.